We begin with the raw amino-acid sequence, 2873 residues long: Fibrillin-1 (2873 aa).

A signal peptide spans 1–24; that stretch reads MRRGGLLEVALAFALLLESYTSHG. The propeptide occupies 25–44; it reads ADANLEAGSLKETRANRAKR. Residues 45–81 form a fibrillin unique N-terminal (FUN) domain region; the sequence is RGGGGHDALKGPNVCGSRYNAYCCPGWKTLPGGNQCI. Residues 45–452 form an N-terminal domain region; that stretch reads RGGGGHDALK…PPRVLPFNVT (408 aa). 11 disulfide bridges follow: Cys59–Cys68, Cys67–Cys80, Cys85–Cys94, Cys89–Cys100, Cys102–Cys111, Cys119–Cys129, Cys123–Cys134, Cys136–Cys145, Cys150–Cys160, Cys154–Cys166, and Cys168–Cys177. EGF-like domains follow at residues 81–112, 115–146, and 147–178; these read IVPI…PSCG, SIQH…THCG, and QPVC…PQCE. The interval 119 to 329 is interaction with MFAP4; it reads CSIRCMNGGS…YTSPDGTRCV (211 aa). The region spanning 184–236 is the TB 1 domain; it reads GPCFTVVSNQMCQGQLSGIVCTKTLCCATVGRAWGHPCEMCPAQPHPCRRGFI. The tract at residues 195-221 is hybrid domain 1; the sequence is CQGQLSGIVCTKTLCCATVGRAWGHPC. Residues 246–287 enclose the EGF-like 4; calcium-binding domain; it reads DVDECQAIPGMCQGGNCINTVGSFECKCPAGHKFNEVSQKCE. 6 cysteine pairs are disulfide-bonded: Cys250–Cys262, Cys257–Cys271, Cys273–Cys286, Cys292–Cys304, Cys299–Cys313, and Cys315–Cys328. Ser268 carries O-linked (Glc) serine glycosylation. The EGF-like 5; calcium-binding domain occupies 288–329; sequence DIDECSTIPGVCDGGECTNTVSSYFCKCPPGFYTSPDGTRCV. Positions 334-389 constitute a TB 2 domain; it reads GYCYTALANGRCSNQLPQSITKMQCCCDLGRCWSPGVTVAPEMCPIRSTEDFNKLC. Residue Asn450 is glycosylated (N-linked (GlcNAc...) asparagine). An EGF-like 6 domain is found at 451–491; sequence VTDYCQLVRYLCQNGRCIPTPGSYRCECNKGFQLDIRGECI. Intrachain disulfides connect Cys455/Cys467, Cys462/Cys476, Cys478/Cys490, Cys496/Cys506, Cys501/Cys515, Cys517/Cys530, Cys536/Cys548, Cys543/Cys557, Cys559/Cys572, Cys578/Cys589, Cys584/Cys598, Cys600/Cys613, Cys619/Cys630, Cys625/Cys639, and Cys641/Cys654. A glycan (O-linked (Glc) serine) is linked at Ser473. Residues 492-531 form the EGF-like 7; calcium-binding domain; it reads DVDECEKNPCTGGECINNQGSYTCHCRAGYQSTLTRTECR. Ser512 carries an O-linked (Glc) serine glycan. One can recognise an EGF-like 8; calcium-binding domain in the interval 532 to 573; the sequence is DIDECLQNGRICNNGRCINTDGSFHCVCNAGFHVTRDGKNCE. The 41-residue stretch at 574–614 folds into the EGF-like 9; calcium-binding domain; that stretch reads DMDECSIRNMCLNGMCINEDGSFKCICKPGFQLASDGRYCK. In terms of domain architecture, EGF-like 10; calcium-binding spans 615–655; the sequence is DINECETPGICMNGRCVNTDGSYRCECFPGLAVGLDGRVCV. The region spanning 661 to 713 is the TB 3 domain; that stretch reads STCYGGYRRGQCVKPLFGAVTKSECCCASTEYAFGEPCQPCPAQNSAEYQALC. An EGF-like 11; calcium-binding domain is found at 725-766; that stretch reads DINECALDPDICPNGICENLRGTYKCICNSGYEVDITGKNCV. Intrachain disulfides connect Cys729–Cys741, Cys736–Cys750, Cys752–Cys765, Cys771–Cys783, Cys778–Cys792, Cys794–Cys807, Cys813–Cys823, Cys818–Cys832, Cys834–Cys847, Cys855–Cys877, Cys864–Cys889, Cys878–Cys892, Cys898–Cys910, Cys916–Cys928, Cys923–Cys937, and Cys939–Cys952. Positions 767-808 constitute an EGF-like 12; calcium-binding domain; that stretch reads DINECVLNSLLCDNGQCRNTPGSFVCTCPKGFVYKPDLKTCE. The region spanning 809-848 is the EGF-like 13; calcium-binding domain; it reads DIDECESSPCINGVCKNSPGSFICECSPESTLDPTKTICI. The TB 4 domain occupies 853 to 904; sequence GTCWQTVIDGRCEININGATLKSECCSSLGAAWGSPCTICQLDPICGKGFSR. The segment at 862–887 is hybrid domain 2; sequence GRCEININGATLKSECCSSLGAAWGS. The EGF-like 14; calcium-binding domain occupies 912–953; the sequence is DINECEVFPGVCKNGLCVNSRGSFKCECPNGMTLDATGRICL. Residues 958 to 1010 form the TB 5 domain; it reads ETCFLKYDDEECTLPIAGRHRMDACCCSVGAAWGTEECEECPLRNSREYEELC. Residues 1030–1071 enclose the EGF-like 15; calcium-binding domain; the sequence is DINECKMIPSLCTHGKCRNTIGSFKCRCDSGFALDSEERNCT. 46 disulfides stabilise this stretch: Cys1034–Cys1046, Cys1041–Cys1055, Cys1057–Cys1070, Cys1076–Cys1088, Cys1083–Cys1097, Cys1099–Cys1113, Cys1119–Cys1131, Cys1126–Cys1140, Cys1142–Cys1155, Cys1161–Cys1173, Cys1168–Cys1182, Cys1184–Cys1197, Cys1203–Cys1214, Cys1210–Cys1223, Cys1225–Cys1238, Cys1244–Cys1256, Cys1251–Cys1265, Cys1267–Cys1280, Cys1286–Cys1298, Cys1293–Cys1307, Cys1309–Cys1322, Cys1328–Cys1341, Cys1335–Cys1350, Cys1352–Cys1363, Cys1369–Cys1382, Cys1376–Cys1391, Cys1393–Cys1404, Cys1410–Cys1422, Cys1417–Cys1431, Cys1433–Cys1446, Cys1452–Cys1463, Cys1458–Cys1472, Cys1474–Cys1487, Cys1493–Cys1504, Cys1499–Cys1513, Cys1515–Cys1528, Cys1536–Cys1564, Cys1551–Cys1576, Cys1565–Cys1579, Cys1566–Cys1591, Cys1612–Cys1624, Cys1619–Cys1633, Cys1635–Cys1648, Cys1654–Cys1665, Cys1660–Cys1674, and Cys1676–Cys1689. N-linked (GlcNAc...) asparagine glycosylation is present at Asn1069. An EGF-like 16; calcium-binding domain is found at 1072-1114; that stretch reads DIDECRISPDLCGRGQCVNTPGDFECKCDEGYESGFMMMKNCM. In terms of domain architecture, EGF-like 17; calcium-binding spans 1115 to 1156; the sequence is DIDECQRDPLLCRGGICHNTEGSYRCECPPGHQLSPNISACI. O-linked (Glc) serine glycosylation is present at Ser1137. An N-linked (GlcNAc...) asparagine glycan is attached at Asn1151. Positions 1157–1198 constitute an EGF-like 18; calcium-binding domain; it reads DINECELSANLCPHGRCVNLIGKYQCACNPGYHPTHDRLFCV. In terms of domain architecture, EGF-like 19; calcium-binding spans 1199–1239; the sequence is DIDECSIMNGGCETFCTNSDGSYECSCQPGFALMPDQRSCT. Ser1220 is a glycosylation site (O-linked (Glc) serine). In terms of domain architecture, EGF-like 20; calcium-binding spans 1240-1281; it reads DIDECEDNPNICDGGQCTNIPGEYRCLCYDGFMASEDMKTCV. An EGF-like 21; calcium-binding domain is found at 1282 to 1323; sequence DVNECDLNPNICLSGTCENTKGSFICHCDMGYSGKKGKTGCT. A glycan (O-linked (Glc) serine) is linked at Ser1304. The EGF-like 22; calcium-binding domain maps to 1324-1364; the sequence is DINECEIGAHNCGRHAVCTNTAGSFKCSCSPGWIGDGIKCT. Ser1347 is a glycosylation site (O-linked (Glc) serine). The EGF-like 23; calcium-binding domain maps to 1365-1405; it reads DLDECSNGTHMCSQHADCKNTMGSYRCLCKDGYTGDGFTCT. Asn1371 carries N-linked (GlcNAc...) asparagine glycosylation. Ser1388 carries an O-linked (Glc) serine glycan. The 42-residue stretch at 1406–1447 folds into the EGF-like 24; calcium-binding domain; the sequence is DLDECSENLNLCGNGQCLNAPGGYRCECDMGFVPSADGKACE. Residues 1448–1488 enclose the EGF-like 25; calcium-binding domain; it reads DIDECSLPNICVFGTCHNLPGLFRCECEIGYELDRSGGNCT. N-linked (GlcNAc...) asparagine glycosylation is present at Asn1486. An EGF-like 26; calcium-binding domain is found at 1489-1529; the sequence is DVNECLDPTTCISGNCVNTPGSYTCDCPPDFELNPTRVGCV. Residue Ser1510 is glycosylated (O-linked (Glc) serine). Residues 1530–2733 are C-terminal domain; that stretch reads DTRSGNCYLD…GYPKRGRKRR (1204 aa). In terms of domain architecture, TB 6 spans 1534-1591; it reads GNCYLDIRPRGDNGDTACSNEIGVGVSKASCCCSLGKAWGTPCELCPSVNTSEYKILC. Positions 1543–1545 match the Cell attachment site motif; it reads RGD. The N-linked (GlcNAc...) asparagine glycan is linked to Asn1583. Residues 1608–1649 form the EGF-like 27; calcium-binding domain; sequence DIDECQELPGLCQGGKCINTFGSFQCRCPTGYYLNEDTRVCD. O-linked (Glc) serine glycosylation is present at Ser1630. Residues 1650 to 1690 enclose the EGF-like 28; calcium-binding domain; it reads DVNECETPGICGPGTCYNTVGNYTCICPPDYMQVNGGNNCM. Asn1671 is a glycosylation site (N-linked (GlcNAc...) asparagine). The region spanning 1695–1750 is the TB 7 domain; that stretch reads SLCYRNYYADNQTCDGELLFNMTKKMCCCSYNIGRAWNKPCEQCPIPSTDEFATLC. N-linked (GlcNAc...) asparagine glycans are attached at residues Asn1705 and Asn1715. Residues 1768 to 1809 form the EGF-like 29; calcium-binding domain; that stretch reads DIDECREIPGVCENGVCINMVGSFRCECPVGFFYNDKLLVCE. 40 disulfide bridges follow: Cys1772-Cys1784, Cys1779-Cys1793, Cys1795-Cys1808, Cys1814-Cys1826, Cys1820-Cys1835, Cys1837-Cys1849, Cys1855-Cys1867, Cys1862-Cys1876, Cys1878-Cys1891, Cys1897-Cys1907, Cys1902-Cys1916, Cys1918-Cys1930, Cys1936-Cys1949, Cys1944-Cys1958, Cys1960-Cys1973, Cys1979-Cys1991, Cys1986-Cys2000, Cys2002-Cys2013, Cys2019-Cys2031, Cys2026-Cys2040, Cys2042-Cys2055, Cys2063-Cys2085, Cys2072-Cys2098, Cys2086-Cys2101, Cys2087-Cys2113, Cys2133-Cys2144, Cys2139-Cys2153, Cys2155-Cys2166, Cys2172-Cys2183, Cys2178-Cys2192, Cys2194-Cys2206, Cys2212-Cys2223, Cys2219-Cys2232, Cys2234-Cys2247, Cys2253-Cys2267, Cys2260-Cys2276, Cys2278-Cys2291, Cys2297-Cys2309, Cys2304-Cys2318, and Cys2320-Cys2333. In terms of domain architecture, EGF-like 30; calcium-binding spans 1810–1850; it reads DIDECQNGPVCQRNAECINTAGSYRCDCKPGYRLTSTGQCN. A glycan (O-linked (Glc) serine) is linked at Ser1832. Residues 1851-1892 form the EGF-like 31; calcium-binding domain; sequence DRNECQEIPNICSHGQCIDTVGSFYCLCHTGFKTNVDQTMCL. A glycan (O-linked (Glc) serine) is linked at Ser1873. The region spanning 1893 to 1931 is the EGF-like 32; calcium-binding domain; the sequence is DINECERDACGNGTCRNTIGSFNCRCNHGFILSHNNDCI. The N-linked (GlcNAc...) asparagine glycan is linked to Asn1904. O-linked (Glc) serine glycosylation occurs at Ser1913. Residues 1932 to 1974 form the EGF-like 33; calcium-binding domain; the sequence is DVDECATGNGNLCRNGQCVNTVGSFQCRCNEGYEVAPDGRTCV. O-linked (Glc) serine glycosylation is present at Ser1955. The 40-residue stretch at 1975–2014 folds into the EGF-like 34; calcium-binding domain; it reads DINECVLDPGKCAPGTCQNLDGSYRCICPPGYSLQNDKCE. Residues 2015–2056 enclose the EGF-like 35; calcium-binding domain; the sequence is DIDECVEEPEICALGTCSNTEGSFKCLCPEGFSLSSTGRRCQ. Ser2037 carries an O-linked (Glc) serine glycan. The TB 8 domain maps to 2061-2113; the sequence is SYCYAKFEGGKCSSPKSRNHSKQECCCALKGEGWGDPCELCPTEPDEAFRQIC. The N-linked (GlcNAc...) asparagine glycan is linked to Asn2079. One can recognise an EGF-like 36; calcium-binding domain in the interval 2129 to 2167; the sequence is DMDECKEPDVCRHGQCINTDGSYRCECPFGYILEGNECV. Ser2150 is a glycosylation site (O-linked (Glc) serine). An EGF-like 37; calcium-binding domain is found at 2168–2207; sequence DTDECSVGNPCGNGTCKNVIGGFECTCEEGFEPGPMMTCE. Residue Asn2180 is glycosylated (N-linked (GlcNAc...) asparagine). The 41-residue stretch at 2208-2248 folds into the EGF-like 38; calcium-binding domain; that stretch reads DINECAQNPLLCAFRCVNTYGSYECKCPVGYVLREDRRMCK. O-linked (Glc) serine glycosylation occurs at Ser2229. The region spanning 2249-2292 is the EGF-like 39; calcium-binding domain; it reads DEDECAEGKHDCTEKQMECKNLIGTYMCICGPGYQRRPDGEGCI. In terms of domain architecture, EGF-like 40; calcium-binding spans 2293 to 2334; the sequence is DENECQTKPGICENGRCLNTLGSYTCECNDGFTASPTQDECL. The O-linked (Glc) serine glycan is linked to Ser2315. The region spanning 2339-2392 is the TB 9 domain; that stretch reads GYCFSEVLQNMCQIGSSNRNPVTKSECCCDGGRGWGPHCEICPFEGTVAYKKLC. Residues 2404-2445 enclose the EGF-like 41; calcium-binding domain; it reads DIDECKVIHDVCRNGECVNDRGSYHCICKTGYTPDITGTACV. Cystine bridges form between Cys2408/Cys2420, Cys2415/Cys2429, Cys2431/Cys2444, Cys2450/Cys2461, Cys2457/Cys2470, Cys2472/Cys2485, Cys2491/Cys2502, Cys2498/Cys2511, Cys2513/Cys2524, Cys2530/Cys2543, Cys2537/Cys2552, Cys2554/Cys2567, Cys2573/Cys2583, Cys2579/Cys2592, Cys2594/Cys2607, Cys2613/Cys2624, Cys2619/Cys2633, Cys2635/Cys2648, Cys2654/Cys2665, Cys2661/Cys2674, and Cys2676/Cys2688. The EGF-like 42; calcium-binding domain occupies 2446–2486; it reads DLNECNQAPKPCNFICKNTEGSYQCSCPKGYILQEDGRSCK. An O-linked (Glc) serine glycan is attached at Ser2467. One can recognise an EGF-like 43; calcium-binding domain in the interval 2487–2525; the sequence is DLDECATKQHNCQFLCVNTIGGFTCKCPPGFTQHHTACI. One can recognise an EGF-like 44; calcium-binding domain in the interval 2526–2568; it reads DNNECTSDINLCGSKGVCQNTPGSFTCECQRGFSLDQSGASCE. A glycan (O-linked (Glc) serine) is linked at Ser2549. An EGF-like 45; calcium-binding domain is found at 2569-2608; sequence DVDECEGNHRCQHGCQNIIGGYRCSCPQGYLQHYQWNQCV. Positions 2609–2649 constitute an EGF-like 46; calcium-binding domain; sequence DENECLSAHVCGGASCHNTLGSYKCMCPTGFQYEQFSGGCQ. Residue Ser2630 is glycosylated (O-linked (Glc) serine). The region spanning 2650–2689 is the EGF-like 47; calcium-binding domain; the sequence is DINECGSSQAPCSYGCSNTEGGYLCGCPPGYFRIGQGHCV. Phosphoserine is present on residues Ser2704, Ser2705, and Ser2711. The disordered stretch occupies residues 2728–2747; the sequence is RGRKRRSTNETDASDIQDGS. Asn2736, Asn2752, and Asn2769 each carry an N-linked (GlcNAc...) asparagine glycan.

This sequence belongs to the fibrillin family. Interacts with COL16A1. Interacts with integrin alpha-V/beta-3. Interacts with ADAMTS10; this interaction promotes microfibril assembly. Interacts with THSD4; this interaction promotes fibril formation. Interacts (via N-terminal domain) with FBLN2 and FBLN5. Interacts with ELN. Forms a ternary complex with ELN and FBLN2 or FBLN5 and a significant interaction with ELN seen only in the presence of FBLN2 or FBLN5. Interacts (via N-terminal domain) with LTBP2 (via C-terminal domain) in a Ca(+2)-dependent manner. Interacts (via N-terminal domain) with LTBP1 (via C-terminal domain). Interacts with integrins ITGA5:ITGB1, ITGAV:ITGB3 and ITGAV:ITGB6. Interacts (via N-terminal domain) with BMP2, BMP4, BMP7, BMP10 and GDF5. Interacts (via N-terminal domain) with MFAP2 and MFAP5. Interacts with ADAMTSL5. Interacts with MFAP4. Interacts (via N-terminal domain) with TNFSF11 in a Ca(+2)-dependent manner. Interacts (via N-terminal domain) with EFEMP2; this interaction inhibits EFEMP2 binding to LOX and ELN. Cleavage of N- and C-terminus by furin is required for incorporation into the extracellular matrix and assembly into microfibrils. The C-terminus, which corresponds to the Asprosin chain, was initially thought to constitute a propeptide. Fibrillin-1 and Asprosin chains are still linked together during the secretion from cells, but are subsequently separated by furin, an essential step for incorporation of Fibrillin-1 into the nascent microfibrils. In terms of processing, forms intermolecular disulfide bonds either with other fibrillin-1 molecules or with other components of the microfibrils. Post-translationally, O-glycosylated on serine residues by POGLUT2 and POGLUT3 which is necessary for efficient protein secretion. As to expression, strongly expressed during the first week of osteoblast differentiation. In terms of tissue distribution, secreted by white adipose tissue (at protein level).

Its subcellular location is the secreted. The protein localises to the extracellular space. It is found in the extracellular matrix. Its function is as follows. Structural component of the 10-12 nm diameter microfibrils of the extracellular matrix, which conveys both structural and regulatory properties to load-bearing connective tissues. Fibrillin-1-containing microfibrils provide long-term force bearing structural support. In tissues such as the lung, blood vessels and skin, microfibrils form the periphery of the elastic fiber, acting as a scaffold for the deposition of elastin. In addition, microfibrils can occur as elastin-independent networks in tissues such as the ciliary zonule, tendon, cornea and glomerulus where they provide tensile strength and have anchoring roles. Fibrillin-1 also plays a key role in tissue homeostasis through specific interactions with growth factors, such as the bone morphogenetic proteins (BMPs), growth and differentiation factors (GDFs) and latent transforming growth factor-beta-binding proteins (LTBPs), cell-surface integrins and other extracellular matrix protein and proteoglycan components. Regulates osteoblast maturation by controlling TGF-beta bioavailability and calibrating TGF-beta and BMP levels, respectively. Negatively regulates osteoclastogenesis by binding and sequestering an osteoclast differentiation and activation factor TNFSF11. This leads to disruption of TNFSF11-induced Ca(2+) signaling and impairment of TNFSF11-mediated nuclear translocation and activation of transcription factor NFATC1 which regulates genes important for osteoclast differentiation and function. Mediates cell adhesion via its binding to cell surface receptors integrins ITGAV:ITGB3 and ITGA5:ITGB1. Binds heparin and this interaction plays an important role in the assembly of microfibrils. Adipokine secreted by white adipose tissue that plays an important regulatory role in the glucose metabolism of liver, muscle and pancreas. Hormone that targets the liver in response to fasting to increase plasma glucose levels. Binds the olfactory receptor Olfr734 at the surface of hepatocytes and promotes hepatocyte glucose release by activating the protein kinase A activity in the liver, resulting in rapid glucose release into the circulation. May act as a regulator of adaptive thermogenesis by inhibiting browning and energy consumption, while increasing lipid deposition in white adipose tissue. Also acts as an orexigenic hormone that increases appetite: crosses the blood brain barrier and exerts effects on the hypothalamus. In the arcuate nucleus of the hypothalamus, asprosin directly activates orexigenic AgRP neurons and indirectly inhibits anorexigenic POMC neurons, resulting in appetite stimulation. Activates orexigenic AgRP neurons via binding to the olfactory receptor Olfr734. May also play a role in sperm motility in testis via interaction with Olfr734 receptor. This is Fibrillin-1 from Mus musculus (Mouse).